The primary structure comprises 450 residues: C4-dicarboxylate transport protein (450 aa).

The next 9 membrane-spanning stretches (helical) occupy residues S10 to P30, L46 to M66, Y78 to V98, I143 to G163, I190 to I210, L224 to A244, V291 to L311, I332 to G352, and I354 to I374. The segment at P428–V450 is disordered.

It belongs to the dicarboxylate/amino acid:cation symporter (DAACS) (TC 2.A.23) family.

The protein localises to the cell inner membrane. Responsible for the transport of dicarboxylates such as succinate, fumarate, and malate from the periplasm across the membrane. The protein is C4-dicarboxylate transport protein of Pseudomonas syringae pv. syringae (strain B728a).